The primary structure comprises 377 residues: Leukocyte elastase inhibitor (377 aa).

Met-1 carries the post-translational modification N-acetylmethionine.

This sequence belongs to the serpin family. Ov-serpin subfamily.

It is found in the cytoplasm. Functionally, regulates the activity of the neutrophil proteases. The sequence is that of Leukocyte elastase inhibitor (serpinb1) from Xenopus tropicalis (Western clawed frog).